The following is a 350-amino-acid chain: MKKIKVLCVDDSALVRGLMTEIINSHPDMEVVATAPDPLVARELIKKHNPDVLTLDVEMPRMDGLDFLEKLMRLRPMPVVMVSSLTERGGEITLRALELGAIDFVTKPKLGIRDGLIEYSEVIADKIRAASRARLRAPAPAGHAAPLRLRSPFASSEKLVIVGASTGGTEAIREVLQPLPADSPAILITQHMPAGFTRSFAQRLDALCAVTVREASDGERVLPGHVYLAPGGETHMRLGRSGANYVIGLQASEPVNRHRPSVDVLFHSAAEAAGGNAIGVILTGMGKDGAAGLLAMKRAGARTMAQDEASCVVFGMPREAIALGAADEVVPLADISERILTRLGDRGHRV.

Residues 5–122 enclose the Response regulatory domain; that stretch reads KVLCVDDSAL…RDGLIEYSEV (118 aa). A 4-aspartylphosphate modification is found at D56. The region spanning 152 to 346 is the CheB-type methylesterase domain; sequence PFASSEKLVI…ERILTRLGDR (195 aa). Residues S165, H191, and D288 contribute to the active site.

Belongs to the CheB family. In terms of processing, phosphorylated by CheA. Phosphorylation of the N-terminal regulatory domain activates the methylesterase activity.

The protein localises to the cytoplasm. The catalysed reaction is [protein]-L-glutamate 5-O-methyl ester + H2O = L-glutamyl-[protein] + methanol + H(+). It carries out the reaction L-glutaminyl-[protein] + H2O = L-glutamyl-[protein] + NH4(+). Involved in chemotaxis. Part of a chemotaxis signal transduction system that modulates chemotaxis in response to various stimuli. Catalyzes the demethylation of specific methylglutamate residues introduced into the chemoreceptors (methyl-accepting chemotaxis proteins or MCP) by CheR. Also mediates the irreversible deamidation of specific glutamine residues to glutamic acid. The sequence is that of Protein-glutamate methylesterase/protein-glutamine glutaminase from Bordetella bronchiseptica (strain ATCC BAA-588 / NCTC 13252 / RB50) (Alcaligenes bronchisepticus).